Consider the following 193-residue polypeptide: Imidazoleglycerol-phosphate dehydratase (193 aa).

This sequence belongs to the imidazoleglycerol-phosphate dehydratase family.

The protein resides in the cytoplasm. It catalyses the reaction D-erythro-1-(imidazol-4-yl)glycerol 3-phosphate = 3-(imidazol-4-yl)-2-oxopropyl phosphate + H2O. Its pathway is amino-acid biosynthesis; L-histidine biosynthesis; L-histidine from 5-phospho-alpha-D-ribose 1-diphosphate: step 6/9. The chain is Imidazoleglycerol-phosphate dehydratase from Saccharolobus islandicus (strain Y.N.15.51 / Yellowstone #2) (Sulfolobus islandicus).